Reading from the N-terminus, the 131-residue chain is Peptide methionine sulfoxide reductase MsrB (131 aa).

Positions 8–130 (LDTWREELTD…NSLSLKLVPR (123 aa)) constitute a MsrB domain. Zn(2+) contacts are provided by cysteine 47, cysteine 50, cysteine 96, and cysteine 99. Catalysis depends on cysteine 119, which acts as the Nucleophile.

It belongs to the MsrB Met sulfoxide reductase family. Zn(2+) serves as cofactor.

It catalyses the reaction L-methionyl-[protein] + [thioredoxin]-disulfide + H2O = L-methionyl-(R)-S-oxide-[protein] + [thioredoxin]-dithiol. The sequence is that of Peptide methionine sulfoxide reductase MsrB from Ectopseudomonas mendocina (strain ymp) (Pseudomonas mendocina).